The primary structure comprises 274 residues: MSVRKLKPITPGQRFRVVNGFDAITTDKPERSLIAPIKNSGGRNSQGKMTMRYTGGGHKQRYRIIDFKRTKDGIPASVKSIEYDPNRTAFIALLAYADGEKTYIIAQNGLQVGQKVVSGEGSAPEIGNTLPLSKIPLGTVISCIELRPGQGAVIARSAGTFAQLMARDGKYATIKMPSGETRLILLTCSATIGAVSNSDHQLIVSGKAGRTRWLGRRPRTRPVAMNPVDHPMGGGEGRSSGGHPRSRNGIPAKGYRTRSKKNPSNKYIVERRKK.

Disordered stretches follow at residues 34 to 53 and 216 to 274; these read IAPIKNSGGRNSQGKMTMRY and RRPR…RRKK.

The protein belongs to the universal ribosomal protein uL2 family. In terms of assembly, part of the 50S ribosomal subunit. Forms a bridge to the 30S subunit in the 70S ribosome.

Functionally, one of the primary rRNA binding proteins. Required for association of the 30S and 50S subunits to form the 70S ribosome, for tRNA binding and peptide bond formation. It has been suggested to have peptidyltransferase activity; this is somewhat controversial. Makes several contacts with the 16S rRNA in the 70S ribosome. This chain is Large ribosomal subunit protein uL2, found in Flavobacterium psychrophilum (strain ATCC 49511 / DSM 21280 / CIP 103535 / JIP02/86).